The chain runs to 354 residues: Bergaptol O-methyltransferase (354 aa).

Histidine 121 serves as a coordination point for bergaptol. Residues serine 174, glycine 198, aspartate 221, and lysine 255 each contribute to the S-adenosyl-L-homocysteine site. Histidine 259 is a bergaptol binding site. Histidine 259 (proton acceptor) is an active-site residue.

It belongs to the class I-like SAM-binding methyltransferase superfamily. Cation-independent O-methyltransferase family. COMT subfamily.

It catalyses the reaction a 5-hydroxyfurocoumarin + S-adenosyl-L-methionine = a 5-methoxyfurocoumarin + S-adenosyl-L-homocysteine + H(+). The catalysed reaction is bergaptol + S-adenosyl-L-methionine = bergapten + S-adenosyl-L-homocysteine. With respect to regulation, inhibited by Cu(2+), Ni(2+) and Co(2+). In Ammi majus (Bishop's weed), this protein is Bergaptol O-methyltransferase.